Reading from the N-terminus, the 121-residue chain is Large ribosomal subunit protein uL22 (121 aa).

Belongs to the universal ribosomal protein uL22 family. In terms of assembly, part of the 50S ribosomal subunit.

Functionally, this protein binds specifically to 23S rRNA; its binding is stimulated by other ribosomal proteins, e.g. L4, L17, and L20. It is important during the early stages of 50S assembly. It makes multiple contacts with different domains of the 23S rRNA in the assembled 50S subunit and ribosome. In terms of biological role, the globular domain of the protein is located near the polypeptide exit tunnel on the outside of the subunit, while an extended beta-hairpin is found that lines the wall of the exit tunnel in the center of the 70S ribosome. In Parasynechococcus marenigrum (strain WH8102), this protein is Large ribosomal subunit protein uL22.